We begin with the raw amino-acid sequence, 98 residues long: Co-chaperonin GroES (98 aa).

The tract at residues 32 to 56 is disordered; the sequence is NAKEKPQQGEVLAVGPGRRDDEGKR.

The protein belongs to the GroES chaperonin family. Heptamer of 7 subunits arranged in a ring. Interacts with the chaperonin GroEL.

The protein resides in the cytoplasm. Together with the chaperonin GroEL, plays an essential role in assisting protein folding. The GroEL-GroES system forms a nano-cage that allows encapsulation of the non-native substrate proteins and provides a physical environment optimized to promote and accelerate protein folding. GroES binds to the apical surface of the GroEL ring, thereby capping the opening of the GroEL channel. The protein is Co-chaperonin GroES of Bifidobacterium animalis subsp. lactis (strain AD011).